Consider the following 366-residue polypeptide: Alcohol dehydrogenase (366 aa).

The Zn(2+) site is built by Cys-41, His-62, Glu-63, and Asp-167.

Belongs to the zinc-containing alcohol dehydrogenase family. Homotetramer. Zn(2+) serves as cofactor.

The enzyme catalyses a primary alcohol + NAD(+) = an aldehyde + NADH + H(+). It catalyses the reaction a secondary alcohol + NAD(+) = a ketone + NADH + H(+). It carries out the reaction (R,R)-butane-2,3-diol + NAD(+) = (R)-acetoin + NADH + H(+). The catalysed reaction is an aldehyde + NAD(+) + H2O = a carboxylate + NADH + 2 H(+). In terms of biological role, multifunctional alcohol dehydrogenase exhibiting NAD(+)-dependent dehydrogenase activities for 2,3-butanediol, ethanol and acetaldehyde, and reductase activities for acetoin (NADH-dependent), and diacetyl and acetaldehyde (independently of whether NADH or NADPH is the reductant). The rate of oxidation of 2,3-butanediol is much higher than for the oxidation of ethanol. Has acetaldehyde dehydrogenase activity leading to acetate formation. May function in the release of excess reducing power in the absence of exogenous hydrogen acceptors such as oxygen. The chain is Alcohol dehydrogenase (adh) from Cupriavidus necator (Alcaligenes eutrophus).